We begin with the raw amino-acid sequence, 1316 residues long: Myosin-5 (1316 aa).

Residues 1–12 (MAIVKRGGRTKT) are compositionally biased toward basic residues. The disordered stretch occupies residues 1-29 (MAIVKRGGRTKTKQQQVPAKSSGGGSSGG). One can recognise a Myosin motor domain in the interval 43–731 (VGVSDLTLLS…TLFALEDMRD (689 aa)). 136-143 (GESGAGKT) contributes to the ATP binding site. A Phosphoserine modification is found at S366. Residues 414 to 497 (SIGILDIYGF…PGLFAALNDS (84 aa)) are actin-binding. IQ domains follow at residues 735–755 (HNMA…KEDA) and 756–781 (AKTI…YGNG). The 193-residue stretch at 789–981 (RRRMSMLGSR…TVSVKQGLPA (193 aa)) folds into the TH1 domain. Disordered stretches follow at residues 964 to 1154 (NGDH…PTLV) and 1209 to 1316 (DYLK…DDDW). Composition is skewed to polar residues over residues 971–984 (GTVS…ASSK) and 1018–1030 (PRYN…ANSG). The segment covering 1042 to 1065 (QPQQYQPQQSQQQTPYPTQSSIPS) has biased composition (low complexity). The segment covering 1097–1106 (SPTQQRQTPA) has biased composition (polar residues). Over residues 1117–1129 (ASTTIATTTSHTS) the composition is skewed to low complexity. The segment covering 1137-1153 (PAPPVKKTAPPPPPPTL) has biased composition (pro residues). Residues 1156 to 1216 (PKFPTYKAMF…PIDYLKECSP (61 aa)) form the SH3 domain. Positions 1223–1232 (APPPPPPPPA) are enriched in pro residues. A compositionally biased stretch (low complexity) spans 1233 to 1268 (ATASAGANGASNPISTTTSTNTTTSSHTTNATSNGS). Positions 1305 to 1316 (SDDEEEEDDDDW) are enriched in acidic residues.

The protein belongs to the TRAFAC class myosin-kinesin ATPase superfamily. Myosin family. Post-translationally, phosphorylation of the TEDS site (Ser-366) is required for the polarization of the actin cytoskeleton. Phosphorylation probably activates the myosin-I ATPase activity.

Its subcellular location is the cytoplasm. The protein resides in the cytoskeleton. It localises to the actin patch. Functionally, type-I myosin implicated in the organization of the actin cytoskeleton. Required for proper actin cytoskeleton polarization and for the internalization step in endocytosis. At the cell cortex, assembles in patch-like structures together with proteins from the actin-polymerizing machinery and promotes actin assembly. Functions as actin nucleation-promoting factor (NPF) for the Arp2/3 complex. Plays a role in chitin deposition in the cell wall, in determination of the budding pattern, and is required for hyphae formation. This is Myosin-5 (MYO5) from Candida albicans (strain SC5314 / ATCC MYA-2876) (Yeast).